The sequence spans 394 residues: Na(+)/H(+) antiporter NhaA (394 aa).

The next 11 helical transmembrane spans lie at 14–34, 59–79, 95–115, 125–145, 154–174, 179–199, 213–233, 254–274, 292–312, 328–348, and 363–383; these read AGGL…NSAL, LLLW…GLEV, VFPA…YLLF, GWAI…ALLG, VFLL…IALF, VSLQ…YMNW, LVLW…GVIV, GLHP…NAGV, IATG…WLAV, IFAV…IASL, and LGIL…LRLV.

Belongs to the NhaA Na(+)/H(+) (TC 2.A.33) antiporter family.

It localises to the cell inner membrane. The enzyme catalyses Na(+)(in) + 2 H(+)(out) = Na(+)(out) + 2 H(+)(in). Na(+)/H(+) antiporter that extrudes sodium in exchange for external protons. This chain is Na(+)/H(+) antiporter NhaA, found in Yersinia pseudotuberculosis serotype O:1b (strain IP 31758).